A 256-amino-acid polypeptide reads, in one-letter code: Phosphatidylglycerol--prolipoprotein diacylglyceryl transferase (256 aa).

3 consecutive transmembrane segments (helical) span residues 19 to 39 (VHWY…LGYW), 56 to 76 (LIFY…MLFY), and 91 to 111 (IWEG…AAWL). A 1,2-diacyl-sn-glycero-3-phospho-(1'-sn-glycerol) is bound at residue Arg-139. Residues 231–251 (FGWLTMGQVLSIPMLLIGIWL) form a helical membrane-spanning segment.

Belongs to the Lgt family.

It is found in the cell inner membrane. The enzyme catalyses L-cysteinyl-[prolipoprotein] + a 1,2-diacyl-sn-glycero-3-phospho-(1'-sn-glycerol) = an S-1,2-diacyl-sn-glyceryl-L-cysteinyl-[prolipoprotein] + sn-glycerol 1-phosphate + H(+). Its pathway is protein modification; lipoprotein biosynthesis (diacylglyceryl transfer). Functionally, catalyzes the transfer of the diacylglyceryl group from phosphatidylglycerol to the sulfhydryl group of the N-terminal cysteine of a prolipoprotein, the first step in the formation of mature lipoproteins. This chain is Phosphatidylglycerol--prolipoprotein diacylglyceryl transferase, found in Legionella pneumophila (strain Paris).